Here is a 414-residue protein sequence, read N- to C-terminus: Gamma-glutamyl phosphate reductase (414 aa).

Belongs to the gamma-glutamyl phosphate reductase family.

It is found in the cytoplasm. It carries out the reaction L-glutamate 5-semialdehyde + phosphate + NADP(+) = L-glutamyl 5-phosphate + NADPH + H(+). It functions in the pathway amino-acid biosynthesis; L-proline biosynthesis; L-glutamate 5-semialdehyde from L-glutamate: step 2/2. Its function is as follows. Catalyzes the NADPH-dependent reduction of L-glutamate 5-phosphate into L-glutamate 5-semialdehyde and phosphate. The product spontaneously undergoes cyclization to form 1-pyrroline-5-carboxylate. The chain is Gamma-glutamyl phosphate reductase from Clostridium botulinum (strain Eklund 17B / Type B).